The following is a 389-amino-acid chain: 26S proteasome non-ATPase regulatory subunit 6 (389 aa).

Residues 193–361 form the PCI domain; sequence DFKQAAELFL…EIVETNRPDS (169 aa).

Belongs to the proteasome subunit S10 family. Component of the 19S proteasome regulatory particle complex. The 26S proteasome consists of a 20S core particle (CP) and two 19S regulatory subunits (RP). The regulatory particle is made of a lid composed of 9 subunits including PSMD6, a base containing 6 ATPases and few additional components.

Component of the 26S proteasome, a multiprotein complex involved in the ATP-dependent degradation of ubiquitinated proteins. This complex plays a key role in the maintenance of protein homeostasis by removing misfolded or damaged proteins, which could impair cellular functions, and by removing proteins whose functions are no longer required. Therefore, the proteasome participates in numerous cellular processes, including cell cycle progression, apoptosis, or DNA damage repair. The protein is 26S proteasome non-ATPase regulatory subunit 6 (PSMD6) of Homo sapiens (Human).